Here is a 391-residue protein sequence, read N- to C-terminus: 8-amino-7-oxononanoate synthase (391 aa).

Arg-24 is a substrate binding site. Residue 112–113 (GY) participates in pyridoxal 5'-phosphate binding. His-137 lines the substrate pocket. Residues Ser-183, His-211, and Thr-240 each coordinate pyridoxal 5'-phosphate. Position 243 is an N6-(pyridoxal phosphate)lysine (Lys-243). Thr-357 is a substrate binding site.

This sequence belongs to the class-II pyridoxal-phosphate-dependent aminotransferase family. BioF subfamily. Homodimer. Pyridoxal 5'-phosphate is required as a cofactor.

It carries out the reaction 6-carboxyhexanoyl-[ACP] + L-alanine + H(+) = (8S)-8-amino-7-oxononanoate + holo-[ACP] + CO2. Its pathway is cofactor biosynthesis; biotin biosynthesis. Functionally, catalyzes the decarboxylative condensation of pimeloyl-[acyl-carrier protein] and L-alanine to produce 8-amino-7-oxononanoate (AON), [acyl-carrier protein], and carbon dioxide. The protein is 8-amino-7-oxononanoate synthase of Alkalilimnicola ehrlichii (strain ATCC BAA-1101 / DSM 17681 / MLHE-1).